The sequence spans 167 residues: SAR-endolysin (167 aa).

A helical; Signal-anchor for type II membrane protein transmembrane segment spans residues 10 to 32; that stretch reads SVMAAISGGAIAIASVLITGPGG. Catalysis depends on proton donor/acceptor residues glutamate 37 and aspartate 46.

Belongs to the glycosyl hydrolase 24 family.

It is found in the host cell inner membrane. It catalyses the reaction Hydrolysis of (1-&gt;4)-beta-linkages between N-acetylmuramic acid and N-acetyl-D-glucosamine residues in a peptidoglycan and between N-acetyl-D-glucosamine residues in chitodextrins.. Signal-arrest-release (SAR) endolysin with lysozyme activity that degrades host peptidoglycans and participates with the pinholin and spanin proteins in the sequential events which lead to programmed host cell lysis releasing the mature viral particles. Once the pinholin has permeabilized the host cell membrane, the SAR-endolysin is released into the periplasm where it breaks down the peptidoglycan layer. The polypeptide is SAR-endolysin (19) (Bacteriophage PS119).